A 295-amino-acid chain; its full sequence is Indole-3-glycerol phosphate synthase (295 aa).

Belongs to the TrpC family.

The catalysed reaction is 1-(2-carboxyphenylamino)-1-deoxy-D-ribulose 5-phosphate + H(+) = (1S,2R)-1-C-(indol-3-yl)glycerol 3-phosphate + CO2 + H2O. It participates in amino-acid biosynthesis; L-tryptophan biosynthesis; L-tryptophan from chorismate: step 4/5. The polypeptide is Indole-3-glycerol phosphate synthase (Prochlorococcus marinus (strain NATL2A)).